A 175-amino-acid chain; its full sequence is Crossover junction endodeoxyribonuclease RuvC (175 aa).

Residues D16, E76, and D148 contribute to the active site. Mg(2+)-binding residues include D16, E76, and D148.

Belongs to the RuvC family. Homodimer which binds Holliday junction (HJ) DNA. The HJ becomes 2-fold symmetrical on binding to RuvC with unstacked arms; it has a different conformation from HJ DNA in complex with RuvA. In the full resolvosome a probable DNA-RuvA(4)-RuvB(12)-RuvC(2) complex forms which resolves the HJ. The cofactor is Mg(2+).

It is found in the cytoplasm. The catalysed reaction is Endonucleolytic cleavage at a junction such as a reciprocal single-stranded crossover between two homologous DNA duplexes (Holliday junction).. Functionally, the RuvA-RuvB-RuvC complex processes Holliday junction (HJ) DNA during genetic recombination and DNA repair. Endonuclease that resolves HJ intermediates. Cleaves cruciform DNA by making single-stranded nicks across the HJ at symmetrical positions within the homologous arms, yielding a 5'-phosphate and a 3'-hydroxyl group; requires a central core of homology in the junction. The consensus cleavage sequence is 5'-(A/T)TT(C/G)-3'. Cleavage occurs on the 3'-side of the TT dinucleotide at the point of strand exchange. HJ branch migration catalyzed by RuvA-RuvB allows RuvC to scan DNA until it finds its consensus sequence, where it cleaves and resolves the cruciform DNA. The chain is Crossover junction endodeoxyribonuclease RuvC from Bradyrhizobium sp. (strain ORS 278).